The sequence spans 525 residues: Chromosomal replication initiator protein DnaA (525 aa).

The domain I, interacts with DnaA modulators stretch occupies residues 1 to 71; that stretch reads MNDFWQHCSA…SDLAREFWNT (71 aa). The interval 71 to 188 is domain II; that stretch reads TPIEVQFVLD…GEADSMYERS (118 aa). Residues 162-182 are disordered; it reads AGRRTWRPGPGAAPANGGEAD. Residues 169–181 show a composition bias toward low complexity; sequence PGPGAAPANGGEA. The domain III, AAA+ region stretch occupies residues 189–405; that stretch reads KLNPVLTFDN…GALRKILAYS (217 aa). ATP is bound by residues G233, G235, K236, and T237. The interval 406–525 is domain IV, binds dsDNA; it reads KFHGREISIE…LHVLEQTLKG (120 aa).

The protein belongs to the DnaA family. In terms of assembly, oligomerizes as a right-handed, spiral filament on DNA at oriC.

The protein localises to the cytoplasm. Functionally, plays an essential role in the initiation and regulation of chromosomal replication. ATP-DnaA binds to the origin of replication (oriC) to initiate formation of the DNA replication initiation complex once per cell cycle. Binds the DnaA box (a 9 base pair repeat at the origin) and separates the double-stranded (ds)DNA. Forms a right-handed helical filament on oriC DNA; dsDNA binds to the exterior of the filament while single-stranded (ss)DNA is stabiized in the filament's interior. The ATP-DnaA-oriC complex binds and stabilizes one strand of the AT-rich DNA unwinding element (DUE), permitting loading of DNA polymerase. After initiation quickly degrades to an ADP-DnaA complex that is not apt for DNA replication. Binds acidic phospholipids. The polypeptide is Chromosomal replication initiator protein DnaA (Burkholderia cenocepacia (strain HI2424)).